The following is a 126-amino-acid chain: MIAGIGTDIVAVVRLERALERHGERFAQRILAPTELLNFREGGATAAFLARRFAAKEAASKALGTGFSDGVTLRDLEVVHDVRGQPSLRFHGAAAERAVALGVSEAALSLSDEREYAVAFVILVTG.

Positions 8 and 57 each coordinate Mg(2+).

The protein belongs to the P-Pant transferase superfamily. AcpS family. Mg(2+) serves as cofactor.

It localises to the cytoplasm. The enzyme catalyses apo-[ACP] + CoA = holo-[ACP] + adenosine 3',5'-bisphosphate + H(+). Its function is as follows. Transfers the 4'-phosphopantetheine moiety from coenzyme A to a Ser of acyl-carrier-protein. This Halorhodospira halophila (strain DSM 244 / SL1) (Ectothiorhodospira halophila (strain DSM 244 / SL1)) protein is Holo-[acyl-carrier-protein] synthase.